We begin with the raw amino-acid sequence, 238 residues long: Heme oxygenase (238 aa).

His17 lines the heme b pocket.

This sequence belongs to the heme oxygenase family.

The protein resides in the plastid. The protein localises to the chloroplast. The catalysed reaction is heme b + 3 reduced [NADPH--hemoprotein reductase] + 3 O2 = biliverdin IXalpha + CO + Fe(2+) + 3 oxidized [NADPH--hemoprotein reductase] + 3 H2O + H(+). Catalyzes the opening of the heme ring with the release of iron. Key enzyme in the synthesis of the chromophoric part of the photosynthetic antennae. In Pyropia yezoensis (Susabi-nori), this protein is Heme oxygenase (pbsA).